The chain runs to 202 residues: Translation initiation factor IF-3 (202 aa).

Residues 172–202 (KTRASARHPEVPGAGSVQDIDATGDTDGSPH) form a disordered region.

It belongs to the IF-3 family. In terms of assembly, monomer.

The protein localises to the cytoplasm. Its function is as follows. IF-3 binds to the 30S ribosomal subunit and shifts the equilibrium between 70S ribosomes and their 50S and 30S subunits in favor of the free subunits, thus enhancing the availability of 30S subunits on which protein synthesis initiation begins. The polypeptide is Translation initiation factor IF-3 (Mycobacterium leprae (strain TN)).